Consider the following 1940-residue polypeptide: Myosin-3 (1940 aa).

The region spanning 33 to 82 (DAKTYCFVVDSKEEYAKGKIKSSQDGKVTVETEDNRTLVVKPEDVYAMNP) is the Myosin N-terminal SH3-like domain. The Myosin motor domain maps to 86 to 779 (DKIEDMAMLT…LLGTLEEMRD (694 aa)). Lys130 carries the N6,N6,N6-trimethyllysine modification. 179-186 (GESGAGKT) contributes to the ATP binding site. 2 actin-binding regions span residues 656–678 (LNKLMSNLRTTHPHFVRCIIPNE) and 758–772 (KFGHTKVFFKAGLLG). The IQ domain maps to 782 to 811 (LAKLITRTQAVCRGFLMRVEFQKMMQRRES). The stretch at 840 to 1933 (LLKSAETEKE…KTRDFTSSRM (1094 aa)) forms a coiled coil. Residues 1260–1289 (ARGKNEETQRSLSELTTQKSRLQTEAGELS) are disordered. A compositionally biased stretch (polar residues) spans 1269 to 1282 (RSLSELTTQKSRLQ).

It belongs to the TRAFAC class myosin-kinesin ATPase superfamily. Myosin family. Muscle myosin is a hexameric protein that consists of 2 heavy chain subunits (MHC), 2 alkali light chain subunits (MLC) and 2 regulatory light chain subunits (MLC-2).

It localises to the cytoplasm. The protein localises to the myofibril. Its function is as follows. Muscle contraction. The sequence is that of Myosin-3 (Myh3) from Rattus norvegicus (Rat).